We begin with the raw amino-acid sequence, 378 residues long: Galanin receptor 2b (378 aa).

Over 1-30 the chain is Extracellular; it reads MSDHEDLNKAMGHWNASESYQLNPASVIVS. Residues 31 to 51 form a helical membrane-spanning segment; sequence VVFSLIFLLGTIGNSLVLAVL. The Cytoplasmic segment spans residues 52–62; it reads LRSGQVGYNTT. Residues 63 to 83 form a helical membrane-spanning segment; the sequence is NLFILNLSVADFFFIIFCVPF. The Extracellular portion of the chain corresponds to 84–101; it reads QATIYSLEGWVFGSFMCK. A disulfide bond links C100 and C177. The chain crosses the membrane as a helical span at residues 102 to 123; the sequence is VVHFFINLTMYASSFTLAAVSV. Residues 124–143 are Cytoplasmic-facing; sequence DRYLAIRYPLRSRELRTPCN. A helical membrane pass occupies residues 144–164; the sequence is AVVAMVVIWGLSLVFAGPYLS. The Extracellular segment spans residues 165–187; sequence YYDLIDFENSNVCVPGWEEHNRK. Residues 188–208 traverse the membrane as a helical segment; that stretch reads VLDTCTFVFGYVIPVLIVSLS. Residues 209–238 lie on the Cytoplasmic side of the membrane; that stretch reads YTRTIKYLWTAVDPLDGMSESKRAKRKVTK. A helical membrane pass occupies residues 239–259; sequence MIIIVTVLFCICWLPYHVVIL. Topologically, residues 260-276 are extracellular; it reads CYLYGDFPFNQTTYAFR. Residues 277–297 traverse the membrane as a helical segment; that stretch reads LLSHCMAYANSCLNPIVYALV. The Cytoplasmic portion of the chain corresponds to 298–378; it reads SKHFRKGFKK…TITLPFQNQP (81 aa). The disordered stretch occupies residues 339 to 362; the sequence is EVSQMNEENARQNESEMVNRPLAQ.

The protein belongs to the G-protein coupled receptor 1 family. Expressed in neurons in the ventral area of the interpeduncular nucleus (IPN) where expression often overlaps with spx1.

Its subcellular location is the membrane. Receptor for the hormone galanin. Receptor for the hormones spexin-1 and spexin-2. The sequence is that of Galanin receptor 2b from Danio rerio (Zebrafish).